A 146-amino-acid chain; its full sequence is Aspartate carbamoyltransferase regulatory chain (146 aa).

Positions 102, 107, 131, and 134 each coordinate Zn(2+).

It belongs to the PyrI family. In terms of assembly, contains catalytic and regulatory chains. It depends on Zn(2+) as a cofactor.

Involved in allosteric regulation of aspartate carbamoyltransferase. This is Aspartate carbamoyltransferase regulatory chain from Clostridium acetobutylicum (strain ATCC 824 / DSM 792 / JCM 1419 / IAM 19013 / LMG 5710 / NBRC 13948 / NRRL B-527 / VKM B-1787 / 2291 / W).